A 530-amino-acid chain; its full sequence is Phosphoenolpyruvate carboxykinase (ATP) (530 aa).

Residues Arg-60, Tyr-195, and Lys-201 each contribute to the substrate site. Residues Lys-201, His-221, and 237–245 (GLSGTGKTT) contribute to the ATP site. Positions 201 and 221 each coordinate Mn(2+). Asp-258 serves as a coordination point for Mn(2+). Glu-286, Arg-324, and Ser-449 together coordinate ATP. Arg-324 lines the substrate pocket.

It belongs to the phosphoenolpyruvate carboxykinase (ATP) family. The cofactor is Mn(2+).

The protein resides in the cytoplasm. It carries out the reaction oxaloacetate + ATP = phosphoenolpyruvate + ADP + CO2. Its pathway is carbohydrate biosynthesis; gluconeogenesis. In terms of biological role, involved in the gluconeogenesis. Catalyzes the conversion of oxaloacetate (OAA) to phosphoenolpyruvate (PEP) through direct phosphoryl transfer between the nucleoside triphosphate and OAA. The polypeptide is Phosphoenolpyruvate carboxykinase (ATP) (Geobacter metallireducens (strain ATCC 53774 / DSM 7210 / GS-15)).